Here is a 358-residue protein sequence, read N- to C-terminus: Holliday junction branch migration complex subunit RuvB (358 aa).

The interval 1-183 (MAEPSLVSGG…FGFTGHLEFY (183 aa)) is large ATPase domain (RuvB-L). ATP contacts are provided by residues Leu-22, Arg-23, Gly-64, Lys-67, Thr-68, Thr-69, 130–132 (EDF), Arg-173, Tyr-183, and Arg-220. Thr-68 contributes to the Mg(2+) binding site. The small ATPAse domain (RuvB-S) stretch occupies residues 184 to 254 (SVAELELVLR…SASAALDMYE (71 aa)). A head domain (RuvB-H) region spans residues 257–358 (ERGLDRLDRS…NHAESVDTVG (102 aa)). Residues Arg-312 and Arg-317 each contribute to the DNA site.

This sequence belongs to the RuvB family. Homohexamer. Forms an RuvA(8)-RuvB(12)-Holliday junction (HJ) complex. HJ DNA is sandwiched between 2 RuvA tetramers; dsDNA enters through RuvA and exits via RuvB. An RuvB hexamer assembles on each DNA strand where it exits the tetramer. Each RuvB hexamer is contacted by two RuvA subunits (via domain III) on 2 adjacent RuvB subunits; this complex drives branch migration. In the full resolvosome a probable DNA-RuvA(4)-RuvB(12)-RuvC(2) complex forms which resolves the HJ.

It is found in the cytoplasm. The enzyme catalyses ATP + H2O = ADP + phosphate + H(+). Its function is as follows. The RuvA-RuvB-RuvC complex processes Holliday junction (HJ) DNA during genetic recombination and DNA repair, while the RuvA-RuvB complex plays an important role in the rescue of blocked DNA replication forks via replication fork reversal (RFR). RuvA specifically binds to HJ cruciform DNA, conferring on it an open structure. The RuvB hexamer acts as an ATP-dependent pump, pulling dsDNA into and through the RuvAB complex. RuvB forms 2 homohexamers on either side of HJ DNA bound by 1 or 2 RuvA tetramers; 4 subunits per hexamer contact DNA at a time. Coordinated motions by a converter formed by DNA-disengaged RuvB subunits stimulates ATP hydrolysis and nucleotide exchange. Immobilization of the converter enables RuvB to convert the ATP-contained energy into a lever motion, pulling 2 nucleotides of DNA out of the RuvA tetramer per ATP hydrolyzed, thus driving DNA branch migration. The RuvB motors rotate together with the DNA substrate, which together with the progressing nucleotide cycle form the mechanistic basis for DNA recombination by continuous HJ branch migration. Branch migration allows RuvC to scan DNA until it finds its consensus sequence, where it cleaves and resolves cruciform DNA. This chain is Holliday junction branch migration complex subunit RuvB, found in Paenarthrobacter aurescens (strain TC1).